A 628-amino-acid chain; its full sequence is UvrABC system protein C (628 aa).

The region spanning 20–99 (TSAGVYLMRD…IKTHKPRYNV (80 aa)) is the GIY-YIG domain. Residues 209–244 (AELLAQLEDQMQTAAAAMNFEHAARLRDRITGLNQL) form the UVR domain.

Belongs to the UvrC family. Interacts with UvrB in an incision complex.

It is found in the cytoplasm. In terms of biological role, the UvrABC repair system catalyzes the recognition and processing of DNA lesions. UvrC both incises the 5' and 3' sides of the lesion. The N-terminal half is responsible for the 3' incision and the C-terminal half is responsible for the 5' incision. This Gloeobacter violaceus (strain ATCC 29082 / PCC 7421) protein is UvrABC system protein C.